Consider the following 1154-residue polypeptide: PAN2-PAN3 deadenylation complex catalytic subunit pan2 (1154 aa).

WD repeat units follow at residues 20–59, 102–145, and 276–315; these read GLPTVATTIAFDDVSELLWAGNEYGRITSFYGPELQRYTS, THDE…DKLR, and ATVSFMLGIEISPSGEALAINDAECFIQLWGSPAKIHFNE. Residues 316 to 451 form a linker region; the sequence is MSKEVEFADV…GARISGESED (136 aa). A USP domain is found at 452–821; that stretch reads DPLLKYSNVE…SPCVLAFQVR (370 aa). Residues 870–1048 form the Exonuclease domain; the sequence is VALDTEFVDL…IEDARMALRL (179 aa). 4 residues coordinate a divalent metal cation: aspartate 873, glutamate 875, aspartate 982, and aspartate 1041. The segment at 1092-1154 is disordered; the sequence is PGTAVTMQNN…GEFFTGSPLK (63 aa). Polar residues-rich tracts occupy residues 1096 to 1109 and 1132 to 1141; these read VTMQNNSGRNTPST and LTPSNGTFSG.

It belongs to the peptidase C19 family. PAN2 subfamily. As to quaternary structure, forms a heterotrimer with an asymmetric homodimer of the regulatory subunit pan3 to form the poly(A)-nuclease (PAN) deadenylation complex. It depends on a divalent metal cation as a cofactor.

It is found in the cytoplasm. The enzyme catalyses Exonucleolytic cleavage of poly(A) to 5'-AMP.. Its activity is regulated as follows. Positively regulated by the regulatory subunit pan3. In terms of biological role, catalytic subunit of the poly(A)-nuclease (PAN) deadenylation complex, one of two cytoplasmic mRNA deadenylases involved in mRNA turnover. PAN specifically shortens poly(A) tails of RNA and the activity is stimulated by poly(A)-binding protein pab1. PAN deadenylation is followed by rapid degradation of the shortened mRNA tails by the CCR4-NOT complex. Deadenylated mRNAs are then degraded by two alternative mechanisms, namely exosome-mediated 3'-5' exonucleolytic degradation, or deadenylation-dependent mRNA decaping and subsequent 5'-3' exonucleolytic degradation by xrn1. May also be involved in post-transcriptional maturation of mRNA poly(A) tails. The protein is PAN2-PAN3 deadenylation complex catalytic subunit pan2 of Emericella nidulans (strain FGSC A4 / ATCC 38163 / CBS 112.46 / NRRL 194 / M139) (Aspergillus nidulans).